A 359-amino-acid polypeptide reads, in one-letter code: Nicotinate-nucleotide--dimethylbenzimidazole phosphoribosyltransferase (359 aa).

The active-site Proton acceptor is the glutamate 318.

The protein belongs to the CobT family. In terms of assembly, homodimer.

The enzyme catalyses 5,6-dimethylbenzimidazole + nicotinate beta-D-ribonucleotide = alpha-ribazole 5'-phosphate + nicotinate + H(+). It participates in nucleoside biosynthesis; alpha-ribazole biosynthesis; alpha-ribazole from 5,6-dimethylbenzimidazole: step 1/2. Its function is as follows. Catalyzes the synthesis of alpha-ribazole-5'-phosphate from nicotinate mononucleotide (NAMN) and 5,6-dimethylbenzimidazole (DMB). In Escherichia coli (strain ATCC 8739 / DSM 1576 / NBRC 3972 / NCIMB 8545 / WDCM 00012 / Crooks), this protein is Nicotinate-nucleotide--dimethylbenzimidazole phosphoribosyltransferase.